A 479-amino-acid polypeptide reads, in one-letter code: V-type ATP synthase beta chain (479 aa).

Positions 458–479 (EGDSEREAPKMDSPHEEISEKS) are disordered.

It belongs to the ATPase alpha/beta chains family.

Functionally, produces ATP from ADP in the presence of a proton gradient across the membrane. The V-type beta chain is a regulatory subunit. In Nitrosococcus oceani (strain ATCC 19707 / BCRC 17464 / JCM 30415 / NCIMB 11848 / C-107), this protein is V-type ATP synthase beta chain.